Here is a 130-residue protein sequence, read N- to C-terminus: Small ribosomal subunit protein uS9 (130 aa).

It belongs to the universal ribosomal protein uS9 family.

In Albidiferax ferrireducens (strain ATCC BAA-621 / DSM 15236 / T118) (Rhodoferax ferrireducens), this protein is Small ribosomal subunit protein uS9.